A 235-amino-acid chain; its full sequence is Urease accessory protein UreF (235 aa).

This sequence belongs to the UreF family. UreD, UreF and UreG form a complex that acts as a GTP-hydrolysis-dependent molecular chaperone, activating the urease apoprotein by helping to assemble the nickel containing metallocenter of UreC. The UreE protein probably delivers the nickel.

Its subcellular location is the cytoplasm. Its function is as follows. Required for maturation of urease via the functional incorporation of the urease nickel metallocenter. This is Urease accessory protein UreF from Ureaplasma urealyticum serovar 10 (strain ATCC 33699 / Western).